A 107-amino-acid chain; its full sequence is UPF0122 protein STH1464 (107 aa).

This sequence belongs to the UPF0122 family.

Functionally, might take part in the signal recognition particle (SRP) pathway. This is inferred from the conservation of its genetic proximity to ftsY/ffh. May be a regulatory protein. This chain is UPF0122 protein STH1464, found in Symbiobacterium thermophilum (strain DSM 24528 / JCM 14929 / IAM 14863 / T).